A 207-amino-acid polypeptide reads, in one-letter code: Protein-L-isoaspartate O-methyltransferase (207 aa).

Ser-56 is a catalytic residue.

The protein belongs to the methyltransferase superfamily. L-isoaspartyl/D-aspartyl protein methyltransferase family.

The protein resides in the cytoplasm. The catalysed reaction is [protein]-L-isoaspartate + S-adenosyl-L-methionine = [protein]-L-isoaspartate alpha-methyl ester + S-adenosyl-L-homocysteine. Functionally, catalyzes the methyl esterification of L-isoaspartyl residues in peptides and proteins that result from spontaneous decomposition of normal L-aspartyl and L-asparaginyl residues. It plays a role in the repair and/or degradation of damaged proteins. This chain is Protein-L-isoaspartate O-methyltransferase, found in Pyrobaculum neutrophilum (strain DSM 2338 / JCM 9278 / NBRC 100436 / V24Sta) (Thermoproteus neutrophilus).